Here is a 660-residue protein sequence, read N- to C-terminus: Bifunctional polymyxin resistance protein ArnA (660 aa).

The tract at residues 1 to 304 (MKTVVFAYHD…TLGLVQGSRL (304 aa)) is formyltransferase ArnAFT. 86-88 (HLI) is a (6R)-10-formyltetrahydrofolate binding site. The active-site Proton donor; for formyltransferase activity is His-104. (6R)-10-formyltetrahydrofolate is bound by residues Arg-114 and 136–140 (VTRAD). The interval 314-660 (RRTRVLILGV…RTVDLTDKPS (347 aa)) is dehydrogenase ArnADH. Residues Asp-347 and 368 to 369 (DI) contribute to the NAD(+) site. UDP-alpha-D-glucuronate-binding positions include Ala-393, Tyr-398, and 432 to 433 (TS). The active-site Proton acceptor; for decarboxylase activity is the Glu-434. UDP-alpha-D-glucuronate-binding positions include Arg-460, Asn-492, 526–535 (KLIDGGKQKR), and Tyr-613. Residue Arg-619 is the Proton donor; for decarboxylase activity of the active site.

The protein in the N-terminal section; belongs to the Fmt family. UDP-L-Ara4N formyltransferase subfamily. This sequence in the C-terminal section; belongs to the NAD(P)-dependent epimerase/dehydratase family. UDP-glucuronic acid decarboxylase subfamily. As to quaternary structure, homohexamer, formed by a dimer of trimers.

The catalysed reaction is UDP-alpha-D-glucuronate + NAD(+) = UDP-beta-L-threo-pentopyranos-4-ulose + CO2 + NADH. It catalyses the reaction UDP-4-amino-4-deoxy-beta-L-arabinose + (6R)-10-formyltetrahydrofolate = UDP-4-deoxy-4-formamido-beta-L-arabinose + (6S)-5,6,7,8-tetrahydrofolate + H(+). Its pathway is nucleotide-sugar biosynthesis; UDP-4-deoxy-4-formamido-beta-L-arabinose biosynthesis; UDP-4-deoxy-4-formamido-beta-L-arabinose from UDP-alpha-D-glucuronate: step 1/3. It participates in nucleotide-sugar biosynthesis; UDP-4-deoxy-4-formamido-beta-L-arabinose biosynthesis; UDP-4-deoxy-4-formamido-beta-L-arabinose from UDP-alpha-D-glucuronate: step 3/3. The protein operates within bacterial outer membrane biogenesis; lipopolysaccharide biosynthesis. Bifunctional enzyme that catalyzes the oxidative decarboxylation of UDP-glucuronic acid (UDP-GlcUA) to UDP-4-keto-arabinose (UDP-Ara4O) and the addition of a formyl group to UDP-4-amino-4-deoxy-L-arabinose (UDP-L-Ara4N) to form UDP-L-4-formamido-arabinose (UDP-L-Ara4FN). The modified arabinose is attached to lipid A and is required for resistance to polymyxin and cationic antimicrobial peptides. In Shigella dysenteriae serotype 1 (strain Sd197), this protein is Bifunctional polymyxin resistance protein ArnA.